Here is a 245-residue protein sequence, read N- to C-terminus: tRNA (guanine-N(1)-)-methyltransferase (245 aa).

Residues Gly113 and 133 to 138 (IGDYVL) contribute to the S-adenosyl-L-methionine site.

The protein belongs to the RNA methyltransferase TrmD family. As to quaternary structure, homodimer.

Its subcellular location is the cytoplasm. The catalysed reaction is guanosine(37) in tRNA + S-adenosyl-L-methionine = N(1)-methylguanosine(37) in tRNA + S-adenosyl-L-homocysteine + H(+). Functionally, specifically methylates guanosine-37 in various tRNAs. The sequence is that of tRNA (guanine-N(1)-)-methyltransferase from Actinobacillus succinogenes (strain ATCC 55618 / DSM 22257 / CCUG 43843 / 130Z).